Here is a 314-residue protein sequence, read N- to C-terminus: Peroxidase 2 (314 aa).

The signal sequence occupies residues 1 to 23 (MASASSVSLMLLVAAAMASAASA). Position 24 is a pyrrolidone carboxylic acid (Q24). Cystine bridges form between C34-C109, C67-C72, C115-C310, and C194-C219. Residue H65 is the Proton acceptor of the active site. Residues D66, V69, G71, D73, and S75 each contribute to the Ca(2+) site. N148 carries N-linked (GlcNAc...) asparagine glycosylation. Substrate is bound at residue P157. A glycan (N-linked (GlcNAc...) asparagine) is linked at N169. H187 serves as a coordination point for heme b. Position 188 (T188) interacts with Ca(2+). N203 carries an N-linked (GlcNAc...) asparagine glycan. Positions 234, 237, and 242 each coordinate Ca(2+). Residues N274 and N309 are each glycosylated (N-linked (GlcNAc...) asparagine).

The protein belongs to the peroxidase family. Classical plant (class III) peroxidase subfamily. Ca(2+) serves as cofactor. It depends on heme b as a cofactor.

The protein resides in the secreted. It carries out the reaction 2 a phenolic donor + H2O2 = 2 a phenolic radical donor + 2 H2O. Removal of H(2)O(2), oxidation of toxic reductants, biosynthesis and degradation of lignin, suberization, auxin catabolism, response to environmental stresses such as wounding, pathogen attack and oxidative stress. These functions might be dependent on each isozyme/isoform in each plant tissue. This chain is Peroxidase 2 (PRX112), found in Oryza sativa subsp. indica (Rice).